Reading from the N-terminus, the 151-residue chain is Large ribosomal subunit protein eL19 (151 aa).

Residues 62–93 (RLKERRKKRSLKSEGKKSGSRKGKKGARANSK) form a disordered region. Residues 79 to 88 (SGSRKGKKGA) are compositionally biased toward basic residues.

Belongs to the eukaryotic ribosomal protein eL19 family. As to quaternary structure, part of the 50S ribosomal subunit.

Binds to the 23S rRNA. This Saccharolobus solfataricus (strain ATCC 35092 / DSM 1617 / JCM 11322 / P2) (Sulfolobus solfataricus) protein is Large ribosomal subunit protein eL19.